A 408-amino-acid polypeptide reads, in one-letter code: DNA primase DnaG (408 aa).

Residues 172–248 form the Toprim domain; the sequence is DSIIIVEGRA…HVDYIARAPP (77 aa). Positions 178, 222, and 224 each coordinate Mg(2+). The segment at 279–304 is disordered; sequence AAGEKAETPQQPPPQQPVPQQEVREE.

It belongs to the archaeal DnaG primase family. In terms of assembly, forms a ternary complex with MCM helicase and DNA. Component of the archaeal exosome complex. Mg(2+) is required as a cofactor.

The enzyme catalyses ssDNA + n NTP = ssDNA/pppN(pN)n-1 hybrid + (n-1) diphosphate.. Functionally, RNA polymerase that catalyzes the synthesis of short RNA molecules used as primers for DNA polymerase during DNA replication. Also part of the exosome, which is a complex involved in RNA degradation. Acts as a poly(A)-binding protein that enhances the interaction between heteromeric, adenine-rich transcripts and the exosome. This chain is DNA primase DnaG, found in Pyrobaculum aerophilum (strain ATCC 51768 / DSM 7523 / JCM 9630 / CIP 104966 / NBRC 100827 / IM2).